The sequence spans 302 residues: Light-independent protochlorophyllide reductase iron-sulfur ATP-binding protein (302 aa).

ATP is bound by residues 46 to 51 (GIGKST) and Lys-75. A Mg(2+)-binding site is contributed by Ser-50. Positions 131 and 165 each coordinate [4Fe-4S] cluster. 216-217 (NR) contributes to the ATP binding site.

This sequence belongs to the NifH/BchL/ChlL family. In terms of assembly, homodimer. Protochlorophyllide reductase is composed of three subunits; BchL, BchN and BchB. [4Fe-4S] cluster is required as a cofactor.

The catalysed reaction is chlorophyllide a + oxidized 2[4Fe-4S]-[ferredoxin] + 2 ADP + 2 phosphate = protochlorophyllide a + reduced 2[4Fe-4S]-[ferredoxin] + 2 ATP + 2 H2O. It participates in porphyrin-containing compound metabolism; bacteriochlorophyll biosynthesis (light-independent). Functionally, component of the dark-operative protochlorophyllide reductase (DPOR) that uses Mg-ATP and reduced ferredoxin to reduce ring D of protochlorophyllide (Pchlide) to form chlorophyllide a (Chlide). This reaction is light-independent. The L component serves as a unique electron donor to the NB-component of the complex, and binds Mg-ATP. The protein is Light-independent protochlorophyllide reductase iron-sulfur ATP-binding protein of Methylocella silvestris (strain DSM 15510 / CIP 108128 / LMG 27833 / NCIMB 13906 / BL2).